The primary structure comprises 418 residues: Equilibrative nucleotide transporter 4 (418 aa).

The next 11 helical transmembrane spans lie at 20 to 40 (MVVC…MLTI), 54 to 74 (SRVF…ILAY), 85 to 105 (ILTG…LDLT), 108 to 128 (GHGG…FGLA), 147 to 169 (LIQS…RLIT), 186 to 206 (IFLA…AYVF), 264 to 284 (HAVN…GFLY), 291 to 311 (GLGD…DLFG), 326 to 346 (KALT…YFTA), 353 to 373 (WMIM…VCIM), and 392 to 412 (LVVF…LWLI).

The protein belongs to the SLC29A/ENT transporter (TC 2.A.57) family. In terms of tissue distribution, expressed in leaves and at lowe levels in stems and flowers.

The protein resides in the cell membrane. In terms of biological role, nucleoside transporter that can mediate uptake of adenosine, uridine, guanosine or cytidine when expressed in a heterologous system (yeast). This is Equilibrative nucleotide transporter 4 (ENT4) from Arabidopsis thaliana (Mouse-ear cress).